Reading from the N-terminus, the 606-residue chain is Glucose methanol choline oxidoreductase atC (606 aa).

The N-terminal stretch at 1-19 (MRVFPTYIAVSGLFGGAFA) is a signal peptide. N-linked (GlcNAc...) asparagine glycosylation is found at Asn43, Asn69, Asn87, Asn290, Asn368, Asn418, Asn421, and Asn552.

Belongs to the GMC oxidoreductase family.

The enzyme catalyses terremutin + A = terreate + AH2. It functions in the pathway secondary metabolite biosynthesis. In terms of biological role, glucose methanol choline oxidoreductase; part of the gene cluster that mediates the biosynthesis of terreic acid, a quinone epoxide inhibitor of Bruton's tyrosine kinase. The first step of the pathway is the synthesis of 6-methylsalicylic acid (6-MSA) by the 6-methylsalicylic acid synthase atX. In the biosynthesis of 6-MSA, atX utilizes one acetyl-CoA and three malonyl-CoAs as its substrates and catalyzes a series of programmed reactions including Claisen condensation, reduction, aldol cyclization, and the hydrolytic cleavage that yields 6-MSA. The 6-methylsalicylate 1-monooxygenase atA then catalyzes the decarboxylative hydroxylation of 6-MSA to 3-methylcatechol. The next step is the conversion of 3-methylcatechol to 3-methyl-1,2,4-benzenetriol by cytochrome P450 monooxygenase atE, which is enhanced by cytochrome P450 monooxygenase atG. Then, the epoxidase atD catalyzes the epoxidation and hydroxyl oxidation of 3-methyl-1,2,4-benzenetriol to terremutin. Lastly, GMC oxidoreductase atC oxidizes terremutin to terreic acid. This Aspergillus terreus (strain NIH 2624 / FGSC A1156) protein is Glucose methanol choline oxidoreductase atC.